The primary structure comprises 186 residues: Elongation factor P (186 aa).

This sequence belongs to the elongation factor P family.

The protein resides in the cytoplasm. It functions in the pathway protein biosynthesis; polypeptide chain elongation. In terms of biological role, involved in peptide bond synthesis. Stimulates efficient translation and peptide-bond synthesis on native or reconstituted 70S ribosomes in vitro. Probably functions indirectly by altering the affinity of the ribosome for aminoacyl-tRNA, thus increasing their reactivity as acceptors for peptidyl transferase. This chain is Elongation factor P, found in Shewanella piezotolerans (strain WP3 / JCM 13877).